Here is a 172-residue protein sequence, read N- to C-terminus: MDNSSIQELQQPLLPSITCDLLAPRSEKPELGTPFPETAFAESPRGWQLLLPPLPSVSAGLGEPETPDFEDTLSSDSDSDDDGGDRLSPLLPHDHLGLAVFSVLCCFWPVGIAAFCLAHKTNKAWAKGDVQGAGAASRRAFLLGVLAVGLGLCTYAAALVTLAAYLASRDPP.

At 1 to 97 (MDNSSIQELQ…SPLLPHDHLG (97 aa)) the chain is on the extracellular side. The segment at 60-86 (GLGEPETPDFEDTLSSDSDSDDDGGDR) is disordered. Over residues 65-83 (ETPDFEDTLSSDSDSDDDG) the composition is skewed to acidic residues. The chain crosses the membrane as a helical span at residues 98-118 (LAVFSVLCCFWPVGIAAFCLA). Residues 119–139 (HKTNKAWAKGDVQGAGAASRR) are Cytoplasmic-facing. The helical transmembrane segment at 140–160 (AFLLGVLAVGLGLCTYAAALV) threads the bilayer. Topologically, residues 161 to 172 (TLAAYLASRDPP) are extracellular.

This sequence belongs to the CD225/Dispanin family.

It is found in the membrane. The sequence is that of Transmembrane protein 91 (Tmem91) from Mus musculus (Mouse).